Reading from the N-terminus, the 130-residue chain is Small ribosomal subunit protein uS11 (130 aa).

This sequence belongs to the universal ribosomal protein uS11 family. In terms of assembly, part of the 30S ribosomal subunit. Interacts with proteins S7 and S18. Binds to IF-3.

Its function is as follows. Located on the platform of the 30S subunit, it bridges several disparate RNA helices of the 16S rRNA. Forms part of the Shine-Dalgarno cleft in the 70S ribosome. This Thermotoga maritima (strain ATCC 43589 / DSM 3109 / JCM 10099 / NBRC 100826 / MSB8) protein is Small ribosomal subunit protein uS11.